A 406-amino-acid polypeptide reads, in one-letter code: MAACRGFLLRRINDSCLTFRRHKFKKKWATTLPKIPCSRLALQYFDMNYSMQFGDLWPSIRISLLTEQKYGALVNNFSHKETVLKNLSAFNAKDFISEAQHVISLLQIQNNLDTSEKMTSGEASLNLVGQKNNAEKTQATNLLSSLSNTKLTCFKFSRGDISRFPQSRSDSFGLLEYYLMDAASLLPVLALDVQHGHSVLDLCAAPGGKTLALLQTENCQYLAANDLSTSRSSRLHRVLRSYVPRAQRTEHKVCITSQDGRLWGDAEANTYDRVLVDVPCTTDRHSLLEEENNIFHRIRTKQRQMLPLLQAELLVAGLRAVRPGGEVVYSTCSLSQLQNECVVERAVELAASDHGVHVKPQDLSCFREVFKNTFNFFQGCRVGELVLPHLTANFGPMFFCKLLRIE.

Residues G207, G208, K209, D226, R231, D259, G260, and D277 each contribute to the S-adenosyl-L-methionine site. Residue C332 is the Nucleophile of the active site.

This sequence belongs to the class I-like SAM-binding methyltransferase superfamily. RsmB/NOP family.

The protein localises to the mitochondrion. It catalyses the reaction a cytidine in rRNA + S-adenosyl-L-methionine = a 5-methylcytidine in rRNA + S-adenosyl-L-homocysteine + H(+). The catalysed reaction is a cytidine in mRNA + S-adenosyl-L-methionine = a 5-methylcytidine in mRNA + S-adenosyl-L-homocysteine + H(+). Involved in mitochondrial ribosome large subunit biogenesis. Functionally, mitochondrial RNA cytosine C(5)-methyltransferase that methylates cytosine to 5-methylcytosine (m5C) in various RNAs, such as rRNAs, mRNAs and some long non-coding RNAs (lncRNAs). Involved in mitochondrial ribosome small subunit (SSU) maturation by catalyzing methylation of mitochondrial 12S rRNA. The sequence is that of 5-cytosine rRNA methyltransferase NSUN4 (nsun4) from Xenopus tropicalis (Western clawed frog).